A 538-amino-acid chain; its full sequence is Sodium/hydrogen exchanger 1 (538 aa).

The Cytoplasmic segment spans residues 1 to 19 (MLDSLVSKLPSLSTSDHAS). The chain crosses the membrane as a helical span at residues 20–40 (VVALNLFVALLCACIVLGHLL). Topologically, residues 41–45 (EENRW) are vacuolar. A helical membrane pass occupies residues 46–66 (MNESITALLIGLGTGVTILLI). Residues 67 to 73 (SKGKSSH) are Cytoplasmic-facing. Residues 74-94 (LLVFSEDLFFIYLLPPIIFNA) constitute an intramembrane region (helical). The Cytoplasmic segment spans residues 95-106 (GFQVKKKQFFRN). Residues 107–127 (FVTIMLFGAVGTIISCTIISL) traverse the membrane as a helical segment. The Vacuolar segment spans residues 128–146 (GVTQFFKKLDIGTFDLGDY). 2 consecutive intramembrane regions (helical) follow at residues 147 to 166 (LAIGAIFAATDSVCTLQVLN) and 172 to 192 (LLYSLVFGEGVVNDATSVVVF). Residues 193–216 (NAIQSFDLTHLNHEAAFHLLGNFL) lie on the Vacuolar side of the membrane. Residues 217–237 (YLFLLSTLLGAATGLISAYVI) form a helical membrane-spanning segment. Topologically, residues 238–262 (KKLYFGRHSTDREVALMMLMAYLSY) are cytoplasmic. A helical membrane pass occupies residues 263-283 (MLAELFDLSGILTVFFCGIVM). Over 284 to 302 (SHYTWHNVTESSRITTKHT) the chain is Vacuolar. An N-linked (GlcNAc...) asparagine glycan is attached at Asn290. A helical transmembrane segment spans residues 303-323 (FATLSFLAETFIFLYVGMDAL). Residues 324–342 (DIDKWRSVSDTPGTSIAVS) lie on the Cytoplasmic side of the membrane. A helical transmembrane segment spans residues 343 to 363 (SILMGLVMVGRAAFVFPLSFL). Residues 364 to 378 (SNLAKKNQSEKINFN) are Vacuolar-facing. Asn370 carries an N-linked (GlcNAc...) asparagine glycan. A helical membrane pass occupies residues 379 to 399 (MQVVIWWSGLMRGAVSMALAY). The Cytoplasmic segment spans residues 400–413 (NKFTRAGHTDVRGN). Residues 414–434 (AIMITSTITVCLFSTVVFGML) form a helical membrane-spanning segment. The Vacuolar segment spans residues 435–538 (TKPLISYLLP…ERNPPDLSKA (104 aa)). Asn447 is a glycosylation site (N-linked (GlcNAc...) asparagine). The segment at 496–518 (RTVHYYWRQFDDSFMRPVFGGRG) is interaction with CML18/CAM15.

The protein belongs to the monovalent cation:proton antiporter 1 (CPA1) transporter (TC 2.A.36) family. In terms of assembly, calcium and pH-dependent interaction with CML18/CAM15 (increases when pH decreases, better at pH 5.5 than at pH 7.5). Ubiquitous, with higher levels around vascular tissues and guard cells.

Its subcellular location is the vacuole membrane. The protein localises to the endoplasmic reticulum membrane. It localises to the golgi apparatus membrane. The enzyme catalyses Na(+)(in) + H(+)(out) = Na(+)(out) + H(+)(in). It carries out the reaction K(+)(in) + H(+)(out) = K(+)(out) + H(+)(in). Acts in low affinity electroneutral exchange of protons for cations such as Na(+) or K(+) across membranes. Can also exchange Li(+) and Cs(+) with a lower affinity. Involved in vacuolar ion compartmentalization necessary for cell volume regulation and cytoplasmic Na(+) detoxification. Required during leaves expansion, probably to stimulate epidermal cell expansion. Confers competence to grow in high salinity conditions. This chain is Sodium/hydrogen exchanger 1 (NHX1), found in Arabidopsis thaliana (Mouse-ear cress).